The following is a 124-amino-acid chain: Competence protein ComGG (124 aa).

A signal peptide spans 1–28; it reads MYRTRGFIYPAVLFVSALVLLIVNFVAA.

As to quaternary structure, the transformation pili are flexible filaments, consisting mainly of the major pilin ComGC and smaller amounts of the minor pilins, including at least ComGD, ComGF and ComGG. Interacts with ComGC; the interaction is probably direct. Interacts with ComGD. Interacts with ComGF. May act as a link between ComGC, ComGD and ComGF. Homodimer; disulfide-linked. A minor fraction of ComGG is found as a disulfide-bonded homodimer. Partial processing of ComGG in competent cells requires ComC.

Its subcellular location is the cell membrane. The protein localises to the secreted. In terms of biological role, required for formation of the type IV-like pilus (T4P) that plays a role in transformation. Transformation pili are dynamically extended and retracted, perhaps thereby promoting DNA uptake and transformation. Required for transformation and DNA binding. This chain is Competence protein ComGG (comGG), found in Bacillus subtilis (strain 168).